The primary structure comprises 589 residues: Phenylalanine--tRNA ligase beta subunit (589 aa).

A B5 domain is found at 302–377 (LEVREERISV…IAYGYNNIKK (76 aa)). Asp-355, Asp-361, Glu-364, and Asp-365 together coordinate Mg(2+).

It belongs to the phenylalanyl-tRNA synthetase beta subunit family. Type 2 subfamily. In terms of assembly, tetramer of two alpha and two beta subunits. Mg(2+) is required as a cofactor.

The protein localises to the cytoplasm. The enzyme catalyses tRNA(Phe) + L-phenylalanine + ATP = L-phenylalanyl-tRNA(Phe) + AMP + diphosphate + H(+). The polypeptide is Phenylalanine--tRNA ligase beta subunit (Drosophila melanogaster (Fruit fly)).